The chain runs to 847 residues: Cancer-associated gene 1 protein homolog (847 aa).

Residues 118–161 (EEKPELQSQVYNDPADASQKPDPLKEESLMESSTSENKDELVHE) form a disordered region. Residues 377-567 (NVILEKNDIN…AAKREAQACT (191 aa)) adopt a coiled-coil conformation.

This Rattus norvegicus (Rat) protein is Cancer-associated gene 1 protein homolog (Cage1).